A 1227-amino-acid chain; its full sequence is Tyrosine-protein kinase receptor ver-3 (1227 aa).

Residues 1–17 (MKLKLTVLLILVHASAS) form the signal peptide. At 18 to 764 (YKPPAIEVED…VQVNNAPKGS (747 aa)) the chain is on the extracellular side. Residues 20-110 (PPAIEVEDYQ…RESDTGTYSC (91 aa)) enclose the Ig-like C2-type 1 domain. The cysteines at positions 52 and 110 are disulfide-linked. 7 N-linked (GlcNAc...) asparagine glycosylation sites follow: N119, N211, N245, N255, N381, N425, and N528. An Ig-like C2-type 2 domain is found at 200–325 (VNFECRYKKE…EHENKETKYT (126 aa)). The cysteines at positions 204 and 313 are disulfide-linked. 2 Ig-like C2-type domains span residues 565–666 (PHHE…TSID) and 673–758 (PSIT…VQVN). Intrachain disulfides connect C592/C650 and C696/C740. N697 is a glycosylation site (N-linked (GlcNAc...) asparagine). A helical transmembrane segment spans residues 765–785 (LFFYWFLALLLLISIIAVFLL). Topologically, residues 786-1227 (TCKLRASNRL…ERYLIVESHA (442 aa)) are cytoplasmic. The Protein kinase domain maps to 847–1175 (LEILNPIGSG…HMRDSSSQFL (329 aa)). Residues 853–861 (IGSGHFGVV) and K886 each bind ATP. The Proton acceptor role is filled by D1030. Positions 1194–1227 (DWIQDSRPDVPNVSFQKSPKKQKEERYLIVESHA) are disordered. A compositionally biased stretch (basic and acidic residues) spans 1214–1227 (KQKEERYLIVESHA).

The protein belongs to the protein kinase superfamily. Tyr protein kinase family. In terms of tissue distribution, expressed in the ALA neuron.

The protein localises to the cell membrane. The enzyme catalyses L-tyrosyl-[protein] + ATP = O-phospho-L-tyrosyl-[protein] + ADP + H(+). Its function is as follows. Receptor tyrosine kinase which may be involved, downstream of pvf-1, in the positioning of ray 1, the most anterior ray sensillum in the male tail. This Caenorhabditis elegans protein is Tyrosine-protein kinase receptor ver-3.